The following is a 76-amino-acid chain: UPF0346 protein OEOE_1017 (76 aa).

This sequence belongs to the UPF0346 family.

This Oenococcus oeni (strain ATCC BAA-331 / PSU-1) protein is UPF0346 protein OEOE_1017.